The following is a 338-amino-acid chain: Ketol-acid reductoisomerase (NADP(+)) (338 aa).

Residues 1-181 form the KARI N-terminal Rossmann domain; that stretch reads MKVYYDKDAD…GGTRGGVIET (181 aa). Residues 24-27, Arg47, and Ser52 each bind NADP(+); that span reads YGSQ. Residue His107 is part of the active site. Gly133 contacts NADP(+). The KARI C-terminal knotted domain occupies 182–327; the sequence is TFKEETETDL…SRLRDMMPWI (146 aa). Asp190, Glu194, Glu226, and Glu230 together coordinate Mg(2+). Residue Ser251 participates in substrate binding.

The protein belongs to the ketol-acid reductoisomerase family. Requires Mg(2+) as cofactor.

The catalysed reaction is (2R)-2,3-dihydroxy-3-methylbutanoate + NADP(+) = (2S)-2-acetolactate + NADPH + H(+). It catalyses the reaction (2R,3R)-2,3-dihydroxy-3-methylpentanoate + NADP(+) = (S)-2-ethyl-2-hydroxy-3-oxobutanoate + NADPH + H(+). It functions in the pathway amino-acid biosynthesis; L-isoleucine biosynthesis; L-isoleucine from 2-oxobutanoate: step 2/4. Its pathway is amino-acid biosynthesis; L-valine biosynthesis; L-valine from pyruvate: step 2/4. Functionally, involved in the biosynthesis of branched-chain amino acids (BCAA). Catalyzes an alkyl-migration followed by a ketol-acid reduction of (S)-2-acetolactate (S2AL) to yield (R)-2,3-dihydroxy-isovalerate. In the isomerase reaction, S2AL is rearranged via a Mg-dependent methyl migration to produce 3-hydroxy-3-methyl-2-ketobutyrate (HMKB). In the reductase reaction, this 2-ketoacid undergoes a metal-dependent reduction by NADPH to yield (R)-2,3-dihydroxy-isovalerate. In Nitrosomonas eutropha (strain DSM 101675 / C91 / Nm57), this protein is Ketol-acid reductoisomerase (NADP(+)).